A 403-amino-acid chain; its full sequence is MIPPSGAREDSGDGLTGEATGTEQPPSPASTSSLESKLQKLKRSLSFKTKSLRSKSADNFFPRTNSDVKPQADLLAKASPGPSPIAIPGSPASMPTKAGLHPGSNSKLHAFQEHVFKKPTFCDVCNHMIVGTHAKHGLRCGACKMSIHHKCADGLAPQRCMGKLPKGFRRYYSSPLLIHEQFGCIKEVMPIACGNKVDPVYEALRFGTSLAQRTKKGGSGSGSDSPPRTSTSELVDVPEEADGPGDGSDMRTRSNSVFTYPENGMDDFRDQMKTTNHQGPLSKDPLQMNTYVALYRFIPQENEDLEMRPGDMITLLEDSNEDWWKGKIQDRVGFFPANFVQRVEEHEKIYRCVRTFIGCKDQGQITLKENQICVTSEEEQDGFIRVLSGKKRGLVPLDVLVDV.

Positions 1-51 (MIPPSGAREDSGDGLTGEATGTEQPPSPASTSSLESKLQKLKRSLSFKTKS) are disordered. A compositionally biased stretch (polar residues) spans 19–36 (ATGTEQPPSPASTSSLES). The span at 39–51 (QKLKRSLSFKTKS) shows a compositional bias: basic residues. A Phorbol-ester/DAG-type zinc finger spans residues 108-160 (LHAFQEHVFKKPTFCDVCNHMIVGTHAKHGLRCGACKMSIHHKCADGLAPQRC). The disordered stretch occupies residues 212–264 (QRTKKGGSGSGSDSPPRTSTSELVDVPEEADGPGDGSDMRTRSNSVFTYPENG). Low complexity predominate over residues 222–232 (GSDSPPRTSTS). SH3 domains follow at residues 286–345 (LQMN…RVEE) and 348–403 (KIYR…LVDV).

In terms of assembly, interacts (via SH3 domains) with CACNA1S. Interacts with CACNA1H. Interacts with CACNA1C. Expressed predominantly in brain Detected in brain neurons, more specifically in hippocampus, cerebellum and inferior olive. Highly expressed in urinary bladder, and detected at lower levels in adrenal gland. Detected at very low levels in heart, liver, lung and kidney.

It localises to the cytoplasm. The protein localises to the cytosol. The protein resides in the cell membrane. Its subcellular location is the sarcolemma. Its function is as follows. Promotes expression of the ion channel CACNA1H at the cell membrane, and thereby contributes to the regulation of channel activity. Plays a minor and redundant role in promoting the expression of calcium channel CACNA1S at the cell membrane, and thereby contributes to increased channel activity. Slows the rate of calcium-mediated inactivation of CACNA1C calcium channel activity. The protein is SH3 and cysteine-rich domain-containing protein of Mus musculus (Mouse).